Reading from the N-terminus, the 435-residue chain is Enolase (435 aa).

Residue Q163 coordinates (2R)-2-phosphoglycerate. E205 acts as the Proton donor in catalysis. Residues D243, E292, and D319 each coordinate Mg(2+). K344, R373, S374, and K395 together coordinate (2R)-2-phosphoglycerate. Catalysis depends on K344, which acts as the Proton acceptor.

The protein belongs to the enolase family. Requires Mg(2+) as cofactor.

Its subcellular location is the cytoplasm. It localises to the secreted. It is found in the cell surface. It catalyses the reaction (2R)-2-phosphoglycerate = phosphoenolpyruvate + H2O. It functions in the pathway carbohydrate degradation; glycolysis; pyruvate from D-glyceraldehyde 3-phosphate: step 4/5. Functionally, catalyzes the reversible conversion of 2-phosphoglycerate (2-PG) into phosphoenolpyruvate (PEP). It is essential for the degradation of carbohydrates via glycolysis. This chain is Enolase, found in Streptococcus agalactiae serotype Ia (strain ATCC 27591 / A909 / CDC SS700).